An 81-amino-acid chain; its full sequence is U-poneritoxin(01)-Om2a (81 aa).

The signal sequence occupies residues 1–25 (MKPSGITFAFLVVFMMAIMYNSVQA). Residues 26–47 (AAIADADADAEAKAFADAFAEA) constitute a propeptide that is removed on maturation.

Belongs to the formicidae venom precursor-01 superfamily. In terms of processing, truncated sequences of this peptide have also been found in the venom. It is possible they have been cleaved in the venom. Expressed by the venom gland.

Its subcellular location is the secreted. Its function is as follows. Cationic amphipathic alpha-helical peptide with antimicrobial activities against E.coli (MIC=6.2 uM), S.aureus (MIC=6.2 uM), and S.cerevisiae (MIC=50 uM). Also shows histamine-releasing activity (30.1% at 10 uM) and a weak hemolytic activity (10.4% at 50 uM). In Odontomachus monticola (Trap-jaw ant), this protein is U-poneritoxin(01)-Om2a.